Consider the following 329-residue polypeptide: Malate dehydrogenase (329 aa).

Residue 12 to 18 (GAAGQIG) participates in NAD(+) binding. The substrate site is built by Arg-93 and Arg-99. Residues Asn-106, Gln-113, and 130 to 132 (TGN) each bind NAD(+). Substrate contacts are provided by Asn-132 and Arg-163. His-188 functions as the Proton acceptor in the catalytic mechanism.

The protein belongs to the LDH/MDH superfamily. MDH type 2 family.

The catalysed reaction is (S)-malate + NAD(+) = oxaloacetate + NADH + H(+). Catalyzes the reversible oxidation of malate to oxaloacetate. The polypeptide is Malate dehydrogenase (Mycobacterium bovis (strain ATCC BAA-935 / AF2122/97)).